A 326-amino-acid polypeptide reads, in one-letter code: Centriolar satellite-associated tubulin polyglutamylase complex regulator 1 (326 aa).

A required for interaction with PCM1 region spans residues 1–111; sequence MLSPERLALP…HCLLQLLCPD (111 aa). A required for interaction with TPGS1, LRRC49, and TTLL1 region spans residues 1-225; that stretch reads MLSPERLALP…SCPPPALVKE (225 aa).

Belongs to the CSTPP1 family. As to quaternary structure, interacts with PCM1. Interacts with TTLL1, TPGS1, TPGS2 and LRRC49; the interactions link CSTPP1 to the complex TPGC. Binds to alpha-tubulin.

It is found in the cytoplasm. It localises to the cytoskeleton. The protein localises to the microtubule organizing center. Its subcellular location is the centrosome. The protein resides in the centriolar satellite. Regulator of the tubulin polyglutamylase complex (TPGC) that controls cytoskeletal organization, nuclear shape, and cilium disassembly by balancing microtubule and actin assembly. Regulates the assembly and stability of the TPGC and thereby modulates polyglutamylation of the microtubule, which antagonizes MAP4 binding. In Bos taurus (Bovine), this protein is Centriolar satellite-associated tubulin polyglutamylase complex regulator 1 (CSTPP1).